The sequence spans 761 residues: Zinc finger protein 711 (761 aa).

Glycyl lysine isopeptide (Lys-Gly) (interchain with G-Cter in SUMO2) cross-links involve residues Lys224, Lys235, and Lys296. 5 C2H2-type zinc fingers span residues 383–408, 414–436, 476–499, 505–527, and 533–556; these read YPCHICTKKFKSRGFLKRHMKNHPDH, YQCTDCDFTTNKKVSFHNHLESH, HKCKYCDYETAEQGLLNRHLLAVH, HVCVECGKGFRHPSELKKHMRTH, and YQCQYCAFRCADQSNLKTHIKSKH. The segment at 562–584 adopts a C2H2-type 6; atypical zinc-finger fold; that stretch reads YKCEHCPQAFGDERELQRHLDLF. 3 residues coordinate Zn(2+): Cys564, Cys567, and His580. 6 consecutive C2H2-type zinc fingers follow at residues 590 to 613, 619 to 641, 647 to 670, 676 to 698, 704 to 727, and 733 to 755; these read HQCPHCDHKSTNSSDLKRHIISVH, HKCEVCDKGFHRPSELKKHSDIH, HQCRHCDFKTSDPFILSGHILSVH, LKCKRCKRGFRQQNELKKHMKTH, YQCEYCEYSTTDASGFKRHVISIH, and HRCEFCKKGFRRPSEKKQHIMRH.

The protein belongs to the krueppel C2H2-type zinc-finger protein family. In terms of assembly, interacts with PHF8.

It localises to the nucleus. In terms of biological role, transcription regulator required for brain development. Probably acts as a transcription factor that binds to the promoter of target genes and recruits PHF8 histone demethylase, leading to activated expression of genes involved in neuron development, such as KDM5C. May compete with transcription factor ARX for activation of expression of KDM5C. In Mus musculus (Mouse), this protein is Zinc finger protein 711 (Znf711).